Consider the following 366-residue polypeptide: Structure-specific endonuclease subunit SLX1 (366 aa).

Residues 14–95 enclose the GIY-YIG domain; the sequence is AFYCCYLLRS…QNTHATRHID (82 aa). Disordered regions lie at residues 31-59 and 102-124; these read IGST…SMQG and RAEE…KRPP. Over residues 109 to 123 the composition is skewed to basic residues; that stretch reads GKKKATSPGRRRKRP. Residues 234-289 form an SLX1-type zinc finger; the sequence is CGVCKNPADMSSSLILVCPIEACQTVSHLSCLSNKFLTEGGELETLVPLEGTCPGC. Residues 317–366 form a disordered region; that stretch reads KPKRKRKSDNPAESDAADGQALEQEDEELDETWMEDMSQDEEPSPVKKSR. Over residues 339–359 the composition is skewed to acidic residues; the sequence is EQEDEELDETWMEDMSQDEEP.

This sequence belongs to the SLX1 family. Forms a heterodimer with SLX4. A divalent metal cation is required as a cofactor.

The protein resides in the nucleus. Its function is as follows. Catalytic subunit of the SLX1-SLX4 structure-specific endonuclease that resolves DNA secondary structures generated during DNA repair and recombination. Has endonuclease activity towards branched DNA substrates, introducing single-strand cuts in duplex DNA close to junctions with ss-DNA. The sequence is that of Structure-specific endonuclease subunit SLX1 from Phaeosphaeria nodorum (strain SN15 / ATCC MYA-4574 / FGSC 10173) (Glume blotch fungus).